Consider the following 414-residue polypeptide: Phosphopentomutase (414 aa).

Residues aspartate 10, aspartate 309, histidine 314, aspartate 350, histidine 351, and histidine 362 each coordinate Mn(2+).

The protein belongs to the phosphopentomutase family. It depends on Mn(2+) as a cofactor.

The protein resides in the cytoplasm. It catalyses the reaction 2-deoxy-alpha-D-ribose 1-phosphate = 2-deoxy-D-ribose 5-phosphate. It carries out the reaction alpha-D-ribose 1-phosphate = D-ribose 5-phosphate. Its pathway is carbohydrate degradation; 2-deoxy-D-ribose 1-phosphate degradation; D-glyceraldehyde 3-phosphate and acetaldehyde from 2-deoxy-alpha-D-ribose 1-phosphate: step 1/2. Its function is as follows. Isomerase that catalyzes the conversion of deoxy-ribose 1-phosphate (dRib-1-P) and ribose 1-phosphate (Rib-1-P) to deoxy-ribose 5-phosphate (dRib-5-P) and ribose 5-phosphate (Rib-5-P), respectively. The chain is Phosphopentomutase from Hahella chejuensis (strain KCTC 2396).